The following is a 185-amino-acid chain: Elongation factor P (185 aa).

The protein belongs to the elongation factor P family.

The protein localises to the cytoplasm. It functions in the pathway protein biosynthesis; polypeptide chain elongation. Its function is as follows. Involved in peptide bond synthesis. Stimulates efficient translation and peptide-bond synthesis on native or reconstituted 70S ribosomes in vitro. Probably functions indirectly by altering the affinity of the ribosome for aminoacyl-tRNA, thus increasing their reactivity as acceptors for peptidyl transferase. The protein is Elongation factor P of Deinococcus deserti (strain DSM 17065 / CIP 109153 / LMG 22923 / VCD115).